A 418-amino-acid chain; its full sequence is MFLKNILSVLRFALLIDAAPVKRSPGFVTLDFNVKRSLVVPDDPTAESKRSPLFLDLDPTQIPVDDTGRNVGVDKRGPVAVKLDNEIITYSADITVGSNNQKLSVIVDTGSSDLWIPDSKAICIPKWRGDCGDFCKNNGSYSPAASSTSKNLNTRFEIKYADGSYAKGNLYQDTVGIGGASVKNQLFANVWSTSAHKGILGIGFQTNEATRTPYDNLPISLKKQGIIAKNAYSLFLNSPEASSGQIIFGGIDKAKYSGSLVELPITSDRTLSVGLRSVNVMGRNVNVNAGVLLDSGTTISYFTPSIARSIIYALGGQVHFDSAGNKAYVADCKTSGTVDFQFDKNLKISVPASEFLYQLYYTNGKPYPKCEIRVRESEDNILGDNFMRSAYIVYDLDDKKISMAQVKYTSESNIVAIN.

Positions 1–18 (MFLKNILSVLRFALLIDA) are cleaved as a signal peptide. Residues 19–76 (APVKRSPGFVTLDFNVKRSLVVPDDPTAESKRSPLFLDLDPTQIPVDDTGRNVGVDKR) constitute a propeptide, activation peptide. The region spanning 90–404 (YSADITVGSN…DLDDKKISMA (315 aa)) is the Peptidase A1 domain. Asp108 is a catalytic residue. 108 to 110 (DTG) lines the pepstatin A pocket. Cys123 and Cys135 form a disulfide bridge. An N-linked (GlcNAc...) asparagine glycan is attached at Asn138. Asp268 contacts Zn(2+). The active site involves Asp294. 294–298 (DSGTT) contacts pepstatin A. Cys332 and Cys370 are disulfide-bonded.

This sequence belongs to the peptidase A1 family.

Its subcellular location is the secreted. The enzyme catalyses Preferential cleavage at the carboxyl of hydrophobic amino acids, but fails to cleave 15-Leu-|-Tyr-16, 16-Tyr-|-Leu-17 and 24-Phe-|-Phe-25 of insulin B chain. Activates trypsinogen, and degrades keratin.. Its activity is regulated as follows. Inhibited by pepstatin A analogs. Its function is as follows. Secreted aspartic peptidases (SAPs) are a group of ten acidic hydrolases considered as key virulence factors. These enzymes supply the fungus with nutrient amino acids as well as are able to degrade the selected host's proteins involved in the immune defense. Moreover, acts toward human hemoglobin though limited proteolysis to generate a variety of antimicrobial hemocidins, enabling to compete with the other microorganisms of the same physiological niche using the microbicidal peptides generated from the host protein. In Candida albicans (Yeast), this protein is Secreted aspartic protease 6.